The following is a 377-amino-acid chain: Nitric oxide reductase FlRd-NAD(+) reductase (377 aa).

The protein belongs to the FAD-dependent oxidoreductase family. FAD is required as a cofactor.

It is found in the cytoplasm. The catalysed reaction is 2 reduced [nitric oxide reductase rubredoxin domain] + NAD(+) + H(+) = 2 oxidized [nitric oxide reductase rubredoxin domain] + NADH. Its pathway is nitrogen metabolism; nitric oxide reduction. In terms of biological role, one of at least two accessory proteins for anaerobic nitric oxide (NO) reductase. Reduces the rubredoxin moiety of NO reductase. This Escherichia coli O127:H6 (strain E2348/69 / EPEC) protein is Nitric oxide reductase FlRd-NAD(+) reductase.